Here is a 573-residue protein sequence, read N- to C-terminus: MQDSHGNTQILNQANSMVKRTWRLLFRIATLILLVSIFVLSLIIVLQSTPGNLQNDINIIRKELNELMENFETTSKSLLSVSNQITYDVSVLTPIRQEAIETNIISKIKDHCKDRVIKEGSTCTLNRSPLHDVSFLNGFNKFYFTYKDNMQIKFKSLLDYPNFIPTATTPHGCIRIPSFSLGQTHWCYTHNINLLGCADPASSNQYVSLGTLQVLKMGDPYFKVEHSHYLNDGRNRKSCSVVAVPDGCLRNCVTMTKNETENFKDLNWQHNYLHTYHIMVPLKTRIINPPGSSRDWVHIAPGVGSGLLYAKLLIFPLYGGLTEKSVIHNNQSGKYFFPNSTKLQCRNSTMEKIKGAKDSYTITYFSGRLIQSAFLVCDLRQFLSEDCEILIPSNDYMMVGAEGRLYNIENNIFYYQRGSSWWPYPSLYRIRLNLSKKYPRITEIKFTKIEIAPRPGNKDCPGNKACPKECITGVYQDILPLSYPNTAFPHLKQAYYTGFYLNNSLERRNPTFYTADNLDYHQQERLGKFNLTAGYSTTTCFKQTTTARLYCLYIIEVGDSVIGDFQITLFLAA.

Topologically, residues 1–27 (MQDSHGNTQILNQANSMVKRTWRLLFR) are intravirion. The helical transmembrane segment at 28 to 48 (IATLILLVSIFVLSLIIVLQS) threads the bilayer. Residues 49-573 (TPGNLQNDIN…DFQITLFLAA (525 aa)) lie on the Virion surface side of the membrane. 3 disulfide bridges follow: Cys-173-Cys-197, Cys-187-Cys-248, and Cys-239-Cys-252. The interval 235–240 (NRKSCS) is involved in neuraminidase activity. Residues Asn-258, Asn-330, Asn-339, and Asn-347 are each glycosylated (N-linked (GlcNAc...) asparagine; by host). 3 disulfides stabilise this stretch: Cys-345–Cys-466, Cys-377–Cys-387, and Cys-460–Cys-470. A glycan (N-linked (GlcNAc...) asparagine; by host) is linked at Asn-433. 2 N-linked (GlcNAc...) asparagine; by host glycosylation sites follow: Asn-502 and Asn-530. A disulfide bond links Cys-540 and Cys-551.

It belongs to the paramyxoviruses hemagglutinin-neuraminidase family. In terms of assembly, homotetramer; composed of disulfide-linked homodimers. Interacts with F protein trimer.

It localises to the virion membrane. The protein resides in the host cell membrane. The catalysed reaction is Hydrolysis of alpha-(2-&gt;3)-, alpha-(2-&gt;6)-, alpha-(2-&gt;8)- glycosidic linkages of terminal sialic acid residues in oligosaccharides, glycoproteins, glycolipids, colominic acid and synthetic substrates.. Its function is as follows. Attaches the virus to sialic acid-containing cell receptors and thereby initiating infection. Binding of HN protein to the receptor induces a conformational change that allows the F protein to trigger virion/cell membranes fusion. Neuraminidase activity ensures the efficient spread of the virus by dissociating the mature virions from the neuraminic acid containing glycoproteins. This is Hemagglutinin-neuraminidase (HN) from Homo sapiens (Human).